The following is a 228-amino-acid chain: 2,3-bisphosphoglycerate-dependent phosphoglycerate mutase (228 aa).

Substrate contacts are provided by residues 8 to 15 (RHGQSVWN), 21 to 22 (TG), Arg-60, 87 to 90 (ERHY), Lys-98, 114 to 115 (RR), and 183 to 184 (GN). The active-site Tele-phosphohistidine intermediate is the His-9. The active-site Proton donor/acceptor is Glu-87.

This sequence belongs to the phosphoglycerate mutase family. BPG-dependent PGAM subfamily.

It catalyses the reaction (2R)-2-phosphoglycerate = (2R)-3-phosphoglycerate. The protein operates within carbohydrate degradation; glycolysis; pyruvate from D-glyceraldehyde 3-phosphate: step 3/5. In terms of biological role, catalyzes the interconversion of 2-phosphoglycerate and 3-phosphoglycerate. The protein is 2,3-bisphosphoglycerate-dependent phosphoglycerate mutase of Staphylococcus saprophyticus subsp. saprophyticus (strain ATCC 15305 / DSM 20229 / NCIMB 8711 / NCTC 7292 / S-41).